The primary structure comprises 235 residues: Zinc transporter ZIP9 (235 aa).

N-linked (GlcNAc...) asparagine glycosylation occurs at N2. The next 4 membrane-spanning stretches (helical) occupy residues 11–31 (SCVPILVFPSYWASFSCCWWT), 75–95 (TTTLGLVVHAAADGVALGAAA), 104–124 (LIVFVAIMLHKAPAAFGLVSF), and 138–158 (HLLVFSLAAPVMSMVTYLGLS). N-linked (GlcNAc...) asparagine glycosylation is present at N169. A run of 2 helical transmembrane segments spans residues 172–192 (GMAMLFSAGTFLYVATVHVLP) and 214–234 (LEVAALVLGCLIPLILSVGHQ).

Belongs to the ZIP transporter (TC 2.A.5) family.

It localises to the golgi apparatus. It is found in the trans-Golgi network membrane. Its subcellular location is the cell membrane. The protein resides in the cytoplasm. The protein localises to the perinuclear region. It localises to the mitochondrion. It is found in the nucleus. The catalysed reaction is Zn(2+)(in) = Zn(2+)(out). Transports zinc ions across cell and organelle membranes into the cytoplasm and regulates intracellular zinc homeostasis. Participates in the zinc ions efflux out of the secretory compartments. Regulates intracellular zinc level, resulting in the enhancement of AKT1 and MAPK3/MAPK1 (Erk1/2) phosphorylation in response to the BCR activation. Also functions as a membrane androgen receptor that mediates, through a G protein, the non-classical androgen signaling pathway, characterized by the activation of MAPK3/MAPK1 (Erk1/2) and transcription factors CREB1 or ATF1. This pathway contributes to CLDN1 and CLDN5 expression and tight junction formation between adjacent Sertoli cells. Mediates androgen-induced vascular endothelial cell proliferation through activation of an inhibitory G protein leading to the AKT1 and MAPK3/MAPK1 (Erk1/2) activation which in turn modulate inhibition (phosphorylation) of GSK3B and CCND1 transcription. Moreover, has dual functions as a membrane-bound androgen receptor and as an androgen-dependent zinc transporter both of which are mediated through an inhibitory G protein (Gi) that mediates both MAP kinase and zinc signaling leading to the androgen-dependent apoptotic process. In Macaca fascicularis (Crab-eating macaque), this protein is Zinc transporter ZIP9.